A 501-amino-acid polypeptide reads, in one-letter code: Mitogen-activated protein kinase 16 (501 aa).

Residues 22–313 (YEVTEVVGKG…AAEALTDPYF (292 aa)) enclose the Protein kinase domain. ATP-binding positions include 28–36 (VGKGSYGVV) and Lys51. Asp148 acts as the Proton acceptor in catalysis. At Thr184 the chain carries Phosphothreonine. A TXY motif is present at residues 184 to 186 (TDY). Tyr186 bears the Phosphotyrosine mark. The segment at 477-501 (DEESMSEYMNEAADGVPHKIAQLKT) is disordered.

The protein belongs to the protein kinase superfamily. CMGC Ser/Thr protein kinase family. MAP kinase subfamily. In terms of processing, dually phosphorylated on Thr-184 and Tyr-186, which activates the enzyme.

It carries out the reaction L-seryl-[protein] + ATP = O-phospho-L-seryl-[protein] + ADP + H(+). It catalyses the reaction L-threonyl-[protein] + ATP = O-phospho-L-threonyl-[protein] + ADP + H(+). Its activity is regulated as follows. Activated by threonine and tyrosine phosphorylation. This Oryza sativa subsp. japonica (Rice) protein is Mitogen-activated protein kinase 16 (MPK16).